Reading from the N-terminus, the 330-residue chain is Aspartate--ammonia ligase (330 aa).

This sequence belongs to the class-II aminoacyl-tRNA synthetase family. AsnA subfamily.

The protein localises to the cytoplasm. The catalysed reaction is L-aspartate + NH4(+) + ATP = L-asparagine + AMP + diphosphate + H(+). It participates in amino-acid biosynthesis; L-asparagine biosynthesis; L-asparagine from L-aspartate (ammonia route): step 1/1. This is Aspartate--ammonia ligase from Shigella boydii serotype 18 (strain CDC 3083-94 / BS512).